We begin with the raw amino-acid sequence, 222 residues long: Dense granule protein 3 (222 aa).

2 helical membrane-spanning segments follow: residues 22 to 42 (LIPFLVPFVVFLVAAALGGLA) and 162 to 182 (IPGYFVVINAILAAYYIRKVL). The short motif at 219-222 (KKQT) is the Prevents secretion from ER element.

Homodimer. Interacts (via N-terminus) with human host CAMLG (via N-terminus).

The protein resides in the cytoplasm. It localises to the host endoplasmic reticulum. Its subcellular location is the parasitophorous vacuole membrane. Direct host-parasite interaction occurs at the cytoplasmic faces of the parasitophorous vacuole membrane (PVM) and the host endoplasmic reticulum (ER) membrane via GRA3 and host CAMLG association. Direct insertion of GRA3 ER retrieval motif into the host ER membrane contributes to the host ER recruitment to the PVM. In Toxoplasma gondii, this protein is Dense granule protein 3.